The primary structure comprises 303 residues: ATP synthase gamma chain (303 aa).

Belongs to the ATPase gamma chain family. As to quaternary structure, F-type ATPases have 2 components, CF(1) - the catalytic core - and CF(0) - the membrane proton channel. CF(1) has five subunits: alpha(3), beta(3), gamma(1), delta(1), epsilon(1). CF(0) has three main subunits: a, b and c.

Its subcellular location is the cell inner membrane. Produces ATP from ADP in the presence of a proton gradient across the membrane. The gamma chain is believed to be important in regulating ATPase activity and the flow of protons through the CF(0) complex. In Bartonella henselae (strain ATCC 49882 / DSM 28221 / CCUG 30454 / Houston 1) (Rochalimaea henselae), this protein is ATP synthase gamma chain.